The primary structure comprises 142 residues: Transcriptional regulator MraZ (142 aa).

SpoVT-AbrB domains lie at 5 to 47 (THTP…PTET) and 76 to 119 (ASDT…DATE).

Belongs to the MraZ family. Forms oligomers.

The protein localises to the cytoplasm. It is found in the nucleoid. In Cutibacterium acnes (strain DSM 16379 / KPA171202) (Propionibacterium acnes), this protein is Transcriptional regulator MraZ.